Here is a 94-residue protein sequence, read N- to C-terminus: Cell division protein FtsB (94 aa).

Topologically, residues 1–3 (MRT) are cytoplasmic. Residues 4–21 (FAIFLLIALGWLQYTLWF) traverse the membrane as a helical segment. At 22–94 (GKNGMSDYAQ…YRIIDENSEG (73 aa)) the chain is on the periplasmic side. A coiled-coil region spans residues 33–71 (SNDVALQEEVNQGLRNRNEQMFAEIDDLKKGSEAIEERA).

It belongs to the FtsB family. In terms of assembly, part of a complex composed of FtsB, FtsL and FtsQ.

The protein localises to the cell inner membrane. Essential cell division protein. May link together the upstream cell division proteins, which are predominantly cytoplasmic, with the downstream cell division proteins, which are predominantly periplasmic. This Aliivibrio fischeri (strain ATCC 700601 / ES114) (Vibrio fischeri) protein is Cell division protein FtsB.